Reading from the N-terminus, the 152-residue chain is 3-hydroxyacyl-[acyl-carrier-protein] dehydratase FabZ (152 aa).

Residue His58 is part of the active site.

Belongs to the thioester dehydratase family. FabZ subfamily.

The protein resides in the cytoplasm. The enzyme catalyses a (3R)-hydroxyacyl-[ACP] = a (2E)-enoyl-[ACP] + H2O. In terms of biological role, involved in unsaturated fatty acids biosynthesis. Catalyzes the dehydration of short chain beta-hydroxyacyl-ACPs and long chain saturated and unsaturated beta-hydroxyacyl-ACPs. The protein is 3-hydroxyacyl-[acyl-carrier-protein] dehydratase FabZ of Prochlorococcus marinus subsp. pastoris (strain CCMP1986 / NIES-2087 / MED4).